The primary structure comprises 158 residues: Transcription elongation factor GreA (158 aa).

Positions 53 to 75 (AKERQGQVEATIGDLEDKLSRAQ) form a coiled coil.

The protein belongs to the GreA/GreB family.

Its function is as follows. Necessary for efficient RNA polymerase transcription elongation past template-encoded arresting sites. The arresting sites in DNA have the property of trapping a certain fraction of elongating RNA polymerases that pass through, resulting in locked ternary complexes. Cleavage of the nascent transcript by cleavage factors such as GreA or GreB allows the resumption of elongation from the new 3'terminus. GreA releases sequences of 2 to 3 nucleotides. This Sphingopyxis alaskensis (strain DSM 13593 / LMG 18877 / RB2256) (Sphingomonas alaskensis) protein is Transcription elongation factor GreA.